Consider the following 372-residue polypeptide: Glutamate 5-kinase (372 aa).

Position 14 (Lys-14) interacts with ATP. Substrate-binding residues include Ser-54, Asp-141, and Asn-153. 173 to 174 serves as a coordination point for ATP; that stretch reads TD. One can recognise a PUA domain in the interval 280–358; sequence RGTLVLDDGA…EAIVRELGYM (79 aa).

It belongs to the glutamate 5-kinase family.

Its subcellular location is the cytoplasm. It catalyses the reaction L-glutamate + ATP = L-glutamyl 5-phosphate + ADP. Its pathway is amino-acid biosynthesis; L-proline biosynthesis; L-glutamate 5-semialdehyde from L-glutamate: step 1/2. Its function is as follows. Catalyzes the transfer of a phosphate group to glutamate to form L-glutamate 5-phosphate. The chain is Glutamate 5-kinase from Pseudomonas syringae pv. tomato (strain ATCC BAA-871 / DC3000).